A 171-amino-acid chain; its full sequence is Ribosome maturation factor RimM (171 aa).

The region spanning 96-168 (EDGFYDHELE…TATITPPEGL (73 aa)) is the PRC barrel domain.

Belongs to the RimM family. Binds ribosomal protein uS19.

It is found in the cytoplasm. An accessory protein needed during the final step in the assembly of 30S ribosomal subunit, possibly for assembly of the head region. Essential for efficient processing of 16S rRNA. May be needed both before and after RbfA during the maturation of 16S rRNA. It has affinity for free ribosomal 30S subunits but not for 70S ribosomes. The chain is Ribosome maturation factor RimM from Corynebacterium glutamicum (strain R).